A 68-amino-acid chain; its full sequence is Negative regulatory protein YxlD (68 aa).

Transmembrane regions (helical) follow at residues 5–25 (EIII…FLFI) and 37–57 (WGIV…FFVI).

Its subcellular location is the cell membrane. In terms of biological role, together with YxlE, is important for negative regulation of sigma Y activity, being the major negative regulator. The sequence is that of Negative regulatory protein YxlD (yxlD) from Bacillus subtilis (strain 168).